Here is a 298-residue protein sequence, read N- to C-terminus: Probable GTP 3',8-cyclase (298 aa).

The 218-residue stretch at 4 to 221 folds into the Radical SAM core domain; sequence RYGREIRSFR…VFTRKFMQNR (218 aa). GTP is bound at residue R13. [4Fe-4S] cluster-binding residues include C20 and C24. Y26 is an S-adenosyl-L-methionine binding site. C27 serves as a coordination point for [4Fe-4S] cluster. K61 is a GTP binding site. G65 serves as a coordination point for S-adenosyl-L-methionine. T91 is a GTP binding site. S-adenosyl-L-methionine is bound at residue S115. K152 serves as a coordination point for GTP. The [4Fe-4S] cluster site is built by C243 and C246. GTP is bound at residue 248-250; sequence RIR. A [4Fe-4S] cluster-binding site is contributed by C260.

This sequence belongs to the radical SAM superfamily. MoaA family. It depends on [4Fe-4S] cluster as a cofactor.

The catalysed reaction is GTP + AH2 + S-adenosyl-L-methionine = (8S)-3',8-cyclo-7,8-dihydroguanosine 5'-triphosphate + 5'-deoxyadenosine + L-methionine + A + H(+). It functions in the pathway cofactor biosynthesis; molybdopterin biosynthesis. Its function is as follows. Catalyzes the cyclization of GTP to (8S)-3',8-cyclo-7,8-dihydroguanosine 5'-triphosphate. The chain is Probable GTP 3',8-cyclase from Methanococcus maripaludis (strain C7 / ATCC BAA-1331).